The chain runs to 1216 residues: SPOC domain-containing protein 1 (1216 aa).

5 disordered regions span residues 1–74, 166–216, 236–325, 348–462, and 511–601; these read MSQA…RAAG, EARD…GAHS, NLLS…PPQS, RTGS…PRLE, and SSPS…QQEK. A compositionally biased stretch (low complexity) spans 36–50; sequence PGLSPDGPGASSGPG. Basic and acidic residues predominate over residues 177-190; that stretch reads CDRRSPTLSKEEPP. A compositionally biased stretch (basic residues) spans 204–213; that stretch reads RVRKKWRRQG. Over residues 266–278 the composition is skewed to gly residues; sequence SGPGEPGGSGAGC. Residues 314-325 show a composition bias toward low complexity; that stretch reads SLSSAAQAPPQS. A compositionally biased stretch (basic and acidic residues) spans 436–452; sequence RGTDRSSDNSHQDRPEE. Over residues 581–592 the composition is skewed to acidic residues; it reads EAEEDSLPEQPE. In terms of domain architecture, TFIIS central spans 608 to 728; it reads VRGTVVRSMQ…IIEQQQKEPC (121 aa). The tract at residues 823 to 850 is disordered; that stretch reads QTPMPAPEMPKTRELSPTEPQDRVPPSG. Residues 832-844 are compositionally biased toward basic and acidic residues; sequence PKTRELSPTEPQD. Residues 867–970 form the SPOC domain; sequence WEGVLDMFSI…VEHMGMVLLP (104 aa). Positions 1046–1055 are enriched in basic and acidic residues; that stretch reads RYYQPDDRRP. Disordered regions lie at residues 1046–1140 and 1176–1216; these read RYYQ…QHFH and PRPL…PRKA.

Interacts with DNMT3A, DNMT3C and DNMT3L. Interacts with C19orf84. Interacts with SPIN1; promoting recruitment to transposons marked with histone H3 trimethylated at both 'Lys-4' and 'Lys-9' (H3K4me3K9me3).

Its subcellular location is the nucleus. It localises to the chromosome. In terms of biological role, protein adapter that acts as an essential executor of PIWIL4-piRNA pathway directed transposon DNA methylation and silencing in the male embryonic germ cells. Recruited to young transposons, which are specifically marked with histone H3 trimethylated at both 'Lys-4' and 'Lys-9' (H3K4me3K9me3), via its association with SPIN1 chromatin reader, and associates with the de novo DNA methylation machinery and repressive chromatin remodeling complexes. Following this, PIWIL4 engages with nascent transposable element transcript to direct piRNA-directed DNA methylation. Not required for piRNA biosynthesis. This chain is SPOC domain-containing protein 1, found in Homo sapiens (Human).